Consider the following 216-residue polypeptide: Pyridoxine/pyridoxamine 5'-phosphate oxidase (216 aa).

Residues 64–69, 79–80, lysine 85, lysine 86, and glutamine 108 contribute to the FMN site; these read RVVLLK and FT. Residue lysine 69 participates in substrate binding. The substrate site is built by tyrosine 126, arginine 130, and serine 134. FMN-binding positions include 143 to 144 and tryptophan 188; that span reads QS. Position 194–196 (194–196) interacts with substrate; that stretch reads RKH. Arginine 198 is a binding site for FMN.

Belongs to the pyridoxamine 5'-phosphate oxidase family. As to quaternary structure, homodimer. It depends on FMN as a cofactor.

It carries out the reaction pyridoxamine 5'-phosphate + O2 + H2O = pyridoxal 5'-phosphate + H2O2 + NH4(+). The catalysed reaction is pyridoxine 5'-phosphate + O2 = pyridoxal 5'-phosphate + H2O2. The protein operates within cofactor metabolism; pyridoxal 5'-phosphate salvage; pyridoxal 5'-phosphate from pyridoxamine 5'-phosphate: step 1/1. It participates in cofactor metabolism; pyridoxal 5'-phosphate salvage; pyridoxal 5'-phosphate from pyridoxine 5'-phosphate: step 1/1. Functionally, catalyzes the oxidation of either pyridoxine 5'-phosphate (PNP) or pyridoxamine 5'-phosphate (PMP) into pyridoxal 5'-phosphate (PLP). This Wolbachia pipientis wMel protein is Pyridoxine/pyridoxamine 5'-phosphate oxidase.